The following is a 270-amino-acid chain: Glutamate racemase (270 aa).

Residues 14–15 and 46–47 contribute to the substrate site; these read DS and YG. C77 acts as the Proton donor/acceptor in catalysis. Residue 78–79 participates in substrate binding; that stretch reads NT. Residue C186 is the Proton donor/acceptor of the active site. 187–188 contacts substrate; that stretch reads TH.

This sequence belongs to the aspartate/glutamate racemases family.

It carries out the reaction L-glutamate = D-glutamate. The protein operates within cell wall biogenesis; peptidoglycan biosynthesis. Provides the (R)-glutamate required for cell wall biosynthesis. This chain is Glutamate racemase, found in Trichodesmium erythraeum (strain IMS101).